Consider the following 107-residue polypeptide: L-rhamnose mutarotase (107 aa).

Tyr18 serves as a coordination point for substrate. The active-site Proton donor is His22. Substrate-binding positions include Tyr41 and 76-77; that span reads WW.

This sequence belongs to the rhamnose mutarotase family. In terms of assembly, homodimer.

It localises to the cytoplasm. It carries out the reaction alpha-L-rhamnose = beta-L-rhamnose. The protein operates within carbohydrate metabolism; L-rhamnose metabolism. In terms of biological role, involved in the anomeric conversion of L-rhamnose. The protein is L-rhamnose mutarotase of Paraburkholderia phytofirmans (strain DSM 17436 / LMG 22146 / PsJN) (Burkholderia phytofirmans).